The sequence spans 326 residues: Beta-ketoacyl-[acyl-carrier-protein] synthase III (326 aa).

Active-site residues include Cys115 and His253. The ACP-binding stretch occupies residues 254 to 258 (QANKR). Residue Asn283 is part of the active site.

It belongs to the thiolase-like superfamily. FabH family. As to quaternary structure, homodimer.

It is found in the cytoplasm. The enzyme catalyses malonyl-[ACP] + acetyl-CoA + H(+) = 3-oxobutanoyl-[ACP] + CO2 + CoA. It functions in the pathway lipid metabolism; fatty acid biosynthesis. In terms of biological role, catalyzes the condensation reaction of fatty acid synthesis by the addition to an acyl acceptor of two carbons from malonyl-ACP. Catalyzes the first condensation reaction which initiates fatty acid synthesis and may therefore play a role in governing the total rate of fatty acid production. Possesses both acetoacetyl-ACP synthase and acetyl transacylase activities. Its substrate specificity determines the biosynthesis of branched-chain and/or straight-chain of fatty acids. The sequence is that of Beta-ketoacyl-[acyl-carrier-protein] synthase III from Bradyrhizobium diazoefficiens (strain JCM 10833 / BCRC 13528 / IAM 13628 / NBRC 14792 / USDA 110).